The chain runs to 304 residues: Homoserine kinase (304 aa).

90–100 provides a ligand contact to ATP; that stretch reads PLARGLGSSAS.

It belongs to the GHMP kinase family. Homoserine kinase subfamily.

The protein resides in the cytoplasm. It catalyses the reaction L-homoserine + ATP = O-phospho-L-homoserine + ADP + H(+). The protein operates within amino-acid biosynthesis; L-threonine biosynthesis; L-threonine from L-aspartate: step 4/5. Functionally, catalyzes the ATP-dependent phosphorylation of L-homoserine to L-homoserine phosphate. This Staphylococcus aureus (strain bovine RF122 / ET3-1) protein is Homoserine kinase.